A 184-amino-acid polypeptide reads, in one-letter code: Dual specificity protein phosphatase 22 (184 aa).

Glycine 2 carries N-myristoyl glycine lipidation. The region spanning 4–144 (GMNKILPGLY…LQEFEKHEVH (141 aa)) is the Tyrosine-protein phosphatase domain. Serine 58 bears the Phosphoserine mark. Cysteine 88 (phosphocysteine intermediate) is an active-site residue. A protein contacts are provided by leucine 89, alanine 90, valine 92, serine 93, and arginine 94.

This sequence belongs to the protein-tyrosine phosphatase family. Non-receptor class dual specificity subfamily. Monomer. Interacts with LCK; the interaction is direct. Interacts with UBR2; the interaction is direct. In terms of processing, myristoylation regulates subcellular location, and is necessary for activation of JNK. Ubiquitous. Highest expression seen in heart, placenta, lung, liver, kidney and pancreas.

The protein localises to the cytoplasm. The catalysed reaction is O-phospho-L-tyrosyl-[protein] + H2O = L-tyrosyl-[protein] + phosphate. It catalyses the reaction O-phospho-L-seryl-[protein] + H2O = L-seryl-[protein] + phosphate. The enzyme catalyses O-phospho-L-threonyl-[protein] + H2O = L-threonyl-[protein] + phosphate. In terms of biological role, dual specificity phosphatase; can dephosphorylate both phosphotyrosine and phosphoserine or phosphothreonine residues. Activates the JNK signaling pathway. Inhibits T-cell receptor signaling and T-cell mediated immune responses, acting, at least in part, by inducing degradation of E3 ubiquitin ligase UBR2. Dephosphorylates and thereby induces 'Lys-48'-linked ubiquitination of UBR2, leading to proteasomal degradation of UBR2. Dephosphorylates and thereby inactivates tyrosine kinase LCK. Inhibits UBR2-mediated 'Lys-63'-linked ubiquitination of LCK. May play a role in B-cell receptor (BCR) signaling and B-cell function. In Homo sapiens (Human), this protein is Dual specificity protein phosphatase 22 (DUSP22).